The following is a 323-amino-acid chain: MIFSTLEHILTHISFSIISIVITIHLLNLLVHDTVGLCDSSEKGMMATFFCITGLLVTRWIYSRHFPLSDLYESLMFLSWSFSIIHMVPYFRNHKNSLSAITAPSAIFTQGFATSGLLTEMHQSAILVPALQSQWLMMHVSMMLLGYASLLCGSLLSVALLVITFRKTLGIPGKNNHFLIGSFPFGEIRYFNEKRKRSVLKKTSFFSFRNYHRYQLTQRLDHCSYRIISLGFTFSTIGILSGAVWANEAWGSYWNWDPKETWAFITWTIFAIYLHTRTNQRFQDVGPAIVASMGFLIIWICYFGVNLLGIGLHSYGSFALTSN.

Transmembrane regions (helical) follow at residues 9–29, 45–62, 71–91, 98–118, 143–163, 227–247, 261–275, and 285–305; these read ILTH…LLNL, MMAT…RWIY, LYES…VPYF, LSAI…SGLL, MLLG…LLVI, IISL…VWAN, TWAF…IYLH, and VGPA…YFGV.

It belongs to the CcmF/CycK/Ccl1/NrfE/CcsA family. As to quaternary structure, may interact with Ccs1.

Its subcellular location is the plastid. The protein localises to the chloroplast thylakoid membrane. Functionally, required during biogenesis of c-type cytochromes (cytochrome c6 and cytochrome f) at the step of heme attachment. The polypeptide is Cytochrome c biogenesis protein CcsA (Calycanthus floridus var. glaucus (Eastern sweetshrub)).